A 169-amino-acid polypeptide reads, in one-letter code: MSNPMRNPKVEKVVVHMGVGESGQHLVDAEGILETITGQTVVRSYAKRTLPAFTIKKGEPIGCKVTLRGEAAEGFLETSLGIVEKRLNESQFDIFGNVSFGVEEHTDYPGMRYDPNIGIFGMDITVVVNRPGYRVSKRRIAKRKIPTSHKITKEDTISFFKDKYAVEVE.

This sequence belongs to the universal ribosomal protein uL5 family. As to quaternary structure, part of the 50S ribosomal subunit; contacts the 5S rRNA and probably tRNA. Forms a bridge to the 30S subunit in the 70S ribosome.

This is one of the proteins that bind and probably mediate the attachment of the 5S RNA into the large ribosomal subunit, where it forms part of the central protuberance. In the 70S ribosome it contacts protein S13 of the 30S subunit (bridge B1b), connecting the 2 subunits; this bridge is implicated in subunit movement. May contact the P site tRNA; the 5S rRNA and some of its associated proteins might help stabilize positioning of ribosome-bound tRNAs. The polypeptide is Large ribosomal subunit protein uL5 (Methanococcoides burtonii (strain DSM 6242 / NBRC 107633 / OCM 468 / ACE-M)).